The primary structure comprises 276 residues: Putative pyridoxine kinase (276 aa).

ATP is bound at residue Asn-139. Glu-142 contacts Mg(2+). ATP is bound by residues 176–180 (KGGKA), Asp-188, Gly-213, and Lys-238.

It belongs to the ThiD family.

It carries out the reaction pyridoxal + ATP = pyridoxal 5'-phosphate + ADP + H(+). Its function is as follows. Phosphorylates B6 vitamers; functions in a salvage pathway. Uses pyridoxal, pyridoxine, and pyridoxamine as substrates. This chain is Putative pyridoxine kinase (pdxK), found in Staphylococcus aureus (strain COL).